The sequence spans 284 residues: MNNQIIKINDIELANNKPFVLFGGINVLESRDLAMRVAEHYVEVTTKLNIPYVFKASFDKANRSSINSYRGPGLDEGLKIFEEIKKTFNIPLITDVHEPHQAAPVAEVVDVIQLPAFLARQTDLVVAMAKTGAIINVKKPQFLAPHEMRHIITKFNEAGNNNVALCERGSSFGYNNLVVDMLGMDDMKVMAPVIFDATHALQRPGGRADSADGRRAQAAELARSGMALGIAGLFIEAHPNPNEAKCDGPCALALSKLEGYLTQMKAVDDLIKSFAPLDTSASDL.

This sequence belongs to the KdsA family.

It is found in the cytoplasm. It carries out the reaction D-arabinose 5-phosphate + phosphoenolpyruvate + H2O = 3-deoxy-alpha-D-manno-2-octulosonate-8-phosphate + phosphate. It functions in the pathway carbohydrate biosynthesis; 3-deoxy-D-manno-octulosonate biosynthesis; 3-deoxy-D-manno-octulosonate from D-ribulose 5-phosphate: step 2/3. The protein operates within bacterial outer membrane biogenesis; lipopolysaccharide biosynthesis. This Pseudoalteromonas translucida (strain TAC 125) protein is 2-dehydro-3-deoxyphosphooctonate aldolase.